The sequence spans 431 residues: 3-phosphoshikimate 1-carboxyvinyltransferase (431 aa).

3-phosphoshikimate contacts are provided by Lys-26, Ser-27, and Arg-31. Residue Lys-26 participates in phosphoenolpyruvate binding. The phosphoenolpyruvate site is built by Gly-99 and Arg-127. Ser-170, Ser-171, Gln-172, Ser-199, Glu-314, and His-343 together coordinate 3-phosphoshikimate. A phosphoenolpyruvate-binding site is contributed by Gln-172. Glu-314 functions as the Proton acceptor in the catalytic mechanism. The phosphoenolpyruvate site is built by Arg-347, Arg-388, and Lys-413.

Belongs to the EPSP synthase family. Monomer.

Its subcellular location is the cytoplasm. The enzyme catalyses 3-phosphoshikimate + phosphoenolpyruvate = 5-O-(1-carboxyvinyl)-3-phosphoshikimate + phosphate. The protein operates within metabolic intermediate biosynthesis; chorismate biosynthesis; chorismate from D-erythrose 4-phosphate and phosphoenolpyruvate: step 6/7. Catalyzes the transfer of the enolpyruvyl moiety of phosphoenolpyruvate (PEP) to the 5-hydroxyl of shikimate-3-phosphate (S3P) to produce enolpyruvyl shikimate-3-phosphate and inorganic phosphate. The sequence is that of 3-phosphoshikimate 1-carboxyvinyltransferase from Mycobacterium marinum (strain ATCC BAA-535 / M).